The sequence spans 157 residues: Probable succinate transporter subunit YjjB (157 aa).

A run of 4 helical transmembrane segments spans residues 6–26, 55–75, 87–107, and 129–149; these read FFMALMQDMILSAIPAVGFAM, AGFNIEWSTFMASLLVGSIGI, VFTVAAVIPMFPGISAYTAMI, and FLKASSIVGALSIGLSVPGLW.

Belongs to the ThrE exporter (TC 2.A.79) family. In terms of assembly, the transporter is composed of YjjB and YjjP.

It localises to the cell inner membrane. In terms of biological role, involved in succinate export with YjjP. Both proteins are required for export. The sequence is that of Probable succinate transporter subunit YjjB from Salmonella arizonae (strain ATCC BAA-731 / CDC346-86 / RSK2980).